The chain runs to 144 residues: Large ribosomal subunit protein uL11 (144 aa).

This sequence belongs to the universal ribosomal protein uL11 family. Part of the ribosomal stalk of the 50S ribosomal subunit. Interacts with L10 and the large rRNA to form the base of the stalk. L10 forms an elongated spine to which L12 dimers bind in a sequential fashion forming a multimeric L10(L12)X complex. Post-translationally, one or more lysine residues are methylated.

Its function is as follows. Forms part of the ribosomal stalk which helps the ribosome interact with GTP-bound translation factors. This Francisella tularensis subsp. mediasiatica (strain FSC147) protein is Large ribosomal subunit protein uL11.